The primary structure comprises 210 residues: MSKIVFCDFDGTITAVETFAGMLKEFAPDLSAQIMPQMYARTLSLRRGVRQLLESIPSQKYADIIAYAENKPIRPGLAEFLAFLQEQSIPFIIISGGIQGMIETVLKREGLLDKVTAIYGVNLHTQGEYLQVHSDWENETELVAKALIMDKYSGVETIAIGDSVTDITMARKADLVFARDRLIDYLQAENQPYIPWDNFFEIREYLLLRD.

It belongs to the HAD-like hydrolase superfamily. MtnX family.

The enzyme catalyses 2-hydroxy-5-methylsulfanyl-3-oxopent-1-enyl phosphate + H2O = 1,2-dihydroxy-5-(methylsulfanyl)pent-1-en-3-one + phosphate. Its pathway is amino-acid biosynthesis; L-methionine biosynthesis via salvage pathway; L-methionine from S-methyl-5-thio-alpha-D-ribose 1-phosphate: step 4/6. In terms of biological role, dephosphorylates 2-hydroxy-3-keto-5-methylthiopentenyl-1-phosphate (HK-MTPenyl-1-P) yielding 1,2-dihydroxy-3-keto-5-methylthiopentene (DHK-MTPene). This Microcystis aeruginosa protein is 2-hydroxy-3-keto-5-methylthiopentenyl-1-phosphate phosphatase.